Consider the following 448-residue polypeptide: Tubulin beta chain (448 aa).

GTP is bound by residues Gln11, Glu69, Ser138, Gly142, Thr143, Gly144, Asn204, and Asn226. Residue Glu69 participates in Mg(2+) binding. The segment at 425-448 (YQDASISEGEEEYLEEEEPLEHEE) is disordered. Residues 432–448 (EGEEEYLEEEEPLEHEE) are compositionally biased toward acidic residues.

This sequence belongs to the tubulin family. In terms of assembly, dimer of alpha and beta chains. A typical microtubule is a hollow water-filled tube with an outer diameter of 25 nm and an inner diameter of 15 nM. Alpha-beta heterodimers associate head-to-tail to form protofilaments running lengthwise along the microtubule wall with the beta-tubulin subunit facing the microtubule plus end conferring a structural polarity. Microtubules usually have 13 protofilaments but different protofilament numbers can be found in some organisms and specialized cells. It depends on Mg(2+) as a cofactor.

It is found in the cytoplasm. The protein localises to the cytoskeleton. Functionally, tubulin is the major constituent of microtubules, a cylinder consisting of laterally associated linear protofilaments composed of alpha- and beta-tubulin heterodimers. Microtubules grow by the addition of GTP-tubulin dimers to the microtubule end, where a stabilizing cap forms. Below the cap, tubulin dimers are in GDP-bound state, owing to GTPase activity of alpha-tubulin. The chain is Tubulin beta chain from Aspergillus flavus.